Reading from the N-terminus, the 122-residue chain is Large ribosomal subunit protein uL14 (122 aa).

Belongs to the universal ribosomal protein uL14 family. Part of the 50S ribosomal subunit. Forms a cluster with proteins L3 and L19. In the 70S ribosome, L14 and L19 interact and together make contacts with the 16S rRNA in bridges B5 and B8.

Functionally, binds to 23S rRNA. Forms part of two intersubunit bridges in the 70S ribosome. The protein is Large ribosomal subunit protein uL14 of Hyphomonas neptunium (strain ATCC 15444).